The chain runs to 206 residues: Small ribosomal subunit protein uS4 (206 aa).

The 61-residue stretch at 96–156 folds into the S4 RNA-binding domain; sequence SRLDNVVYRM…NKSKNQSRIK (61 aa).

The protein belongs to the universal ribosomal protein uS4 family. As to quaternary structure, part of the 30S ribosomal subunit. Contacts protein S5. The interaction surface between S4 and S5 is involved in control of translational fidelity.

One of the primary rRNA binding proteins, it binds directly to 16S rRNA where it nucleates assembly of the body of the 30S subunit. Functionally, with S5 and S12 plays an important role in translational accuracy. This is Small ribosomal subunit protein uS4 from Buchnera aphidicola subsp. Acyrthosiphon pisum (strain 5A).